We begin with the raw amino-acid sequence, 1233 residues long: Structural maintenance of chromosomes protein 1A (1233 aa).

An ATP-binding site is contributed by Gly32–Ser39. 2 coiled-coil regions span residues Glu104 to Leu124 and Glu163 to Ile503. Basic and acidic residues predominate over residues Ile284–Gln293. Disordered stretches follow at residues Ile284–His307 and Phe350–Glu369. A phosphoserine mark is found at Ser358 and Ser360. The SMC hinge domain occupies Val515–Ala629. Lys648 and Lys713 each carry N6-acetyllysine. A coiled-coil region spans residues Lys660–Met935. Positions Thr946–Thr969 are disordered. Low complexity predominate over residues Glu953–Gln967. 4 positions are modified to phosphoserine: Ser957, Ser962, Ser966, and Ser970. Residues Lys991–Asp1068 are a coiled coil. N6-acetyllysine is present on Lys1037.

It belongs to the SMC family. SMC1 subfamily. Forms a heterodimer with SMC3 in cohesin complexes. Cohesin complexes are composed of the SMC1 (SMC1A or meiosis-specific SMC1B) and SMC3 heterodimer attached via their SMC hinge domain, RAD21 which link them, and one STAG protein (STAG1, STAG2 or meiosis-specific STAG3), which interacts with RAD21. In germ cell cohesin complexes, SMC1A is mutually exclusive with SMC1B. Found in a complex with CDCA5, SMC3 and RAD21, PDS5A/SCC-112 and PDS5B/APRIN. Interacts with STAG3, NDC80, BRAC1, BRAT1 and RPGR. Found in a complex containing POLE and SMC3. The cohesin complex interacts with the cohesin loading complex subunits NIPBL/Scc2 (via HEAT repeats) and MAU2/Scc4. NIPBL directly contacts all members of the complex, RAD21, SMC1A/B, SMC3 and STAG1. Interacts with SYCP2. In terms of processing, phosphorylated upon ionizing radiation or DNA methylation. Phosphorylation of Ser-957 and Ser-966 activates it and is required for S-phase checkpoint activation. Ubiquitinated by the DCX(DCAF15) complex, leading to its degradation.

It is found in the nucleus. It localises to the chromosome. Functionally, involved in chromosome cohesion during cell cycle and in DNA repair. Central component of cohesin complex. The cohesin complex is required for the cohesion of sister chromatids after DNA replication. The cohesin complex apparently forms a large proteinaceous ring within which sister chromatids can be trapped. At anaphase, the complex is cleaved and dissociates from chromatin, allowing sister chromatids to segregate. The cohesin complex may also play a role in spindle pole assembly during mitosis. Involved in DNA repair via its interaction with BRCA1 and its related phosphorylation by ATM, or via its phosphorylation by ATR. Works as a downstream effector both in the ATM/NBS1 branch and in the ATR/MSH2 branch of S-phase checkpoint. The chain is Structural maintenance of chromosomes protein 1A (Smc1a) from Rattus norvegicus (Rat).